We begin with the raw amino-acid sequence, 512 residues long: Colistin resistance protein EmrB (512 aa).

The next 14 membrane-spanning stretches (helical) occupy residues 17 to 37 (WAIF…IQIV), 55 to 75 (VTWV…MSSI), 84 to 104 (VYYT…ALSW), 115 to 135 (IQGF…YLLF), 144 to 164 (LVMF…IGGW), 169 to 189 (FSWH…ATVI), 205 to 225 (SMDW…EYFL), 234 to 254 (LADT…MIFF), 280 to 300 (ITTF…PVFL), 314 to 334 (VMMV…WLIP), 341 to 361 (TVFV…HLSI), 376 to 396 (GIGL…TLPL), 412 to 432 (IGGA…TAMH), and 486 to 506 (FNDL…LTIF).

The protein belongs to the major facilitator superfamily. EmrB family.

It localises to the cell inner membrane. Probably part of an efflux pump system that contributes to adaptation to osmotic stress and resistance to colistin. This chain is Colistin resistance protein EmrB, found in Acinetobacter baumannii (strain ATCC 17978 / DSM 105126 / CIP 53.77 / LMG 1025 / NCDC KC755 / 5377).